We begin with the raw amino-acid sequence, 187 residues long: Elongation factor P (187 aa).

The protein belongs to the elongation factor P family.

It localises to the cytoplasm. The protein operates within protein biosynthesis; polypeptide chain elongation. Functionally, involved in peptide bond synthesis. Stimulates efficient translation and peptide-bond synthesis on native or reconstituted 70S ribosomes in vitro. Probably functions indirectly by altering the affinity of the ribosome for aminoacyl-tRNA, thus increasing their reactivity as acceptors for peptidyl transferase. The chain is Elongation factor P from Paenarthrobacter aurescens (strain TC1).